The chain runs to 93 residues: DNA/RNA-binding protein Alba (93 aa).

Lys-11 carries the N6-acetyllysine modification.

Belongs to the histone-like Alba family. In terms of processing, acetylated. Acetylation at Lys-11 decreases DNA-binding affinity.

Its subcellular location is the cytoplasm. The protein localises to the chromosome. Binds double-stranded DNA tightly but without sequence specificity. Involved in DNA compaction. In Pyrococcus horikoshii (strain ATCC 700860 / DSM 12428 / JCM 9974 / NBRC 100139 / OT-3), this protein is DNA/RNA-binding protein Alba.